Consider the following 343-residue polypeptide: Ribosomal RNA small subunit methyltransferase C (343 aa).

The protein belongs to the methyltransferase superfamily. RsmC family. In terms of assembly, monomer.

It is found in the cytoplasm. It catalyses the reaction guanosine(1207) in 16S rRNA + S-adenosyl-L-methionine = N(2)-methylguanosine(1207) in 16S rRNA + S-adenosyl-L-homocysteine + H(+). Its function is as follows. Specifically methylates the guanine in position 1207 of 16S rRNA in the 30S particle. The protein is Ribosomal RNA small subunit methyltransferase C of Shigella flexneri serotype 5b (strain 8401).